Consider the following 415-residue polypeptide: Probable G-protein coupled receptor 19 (415 aa).

Over 1 to 69 (MGFDHRMETD…LNPGEVATAS (69 aa)) the chain is Extracellular. Asn-25 and Asn-52 each carry an N-linked (GlcNAc...) asparagine glycan. A helical membrane pass occupies residues 70–90 (IFFGALWLFSIFGNSLVCLVI). The Cytoplasmic segment spans residues 91–102 (HRSRRTQSTTNY). The chain crosses the membrane as a helical span at residues 103–123 (FVVSMACADLLISVASTPFVV). Topologically, residues 124 to 152 (LQFTTGRWTLGSAMCKVVRYFQYLTPGVQ) are extracellular. A disulfide bond links Cys-138 and Cys-210. Residues 153–173 (IYVLLSICIDRFYTIVYPLSF) traverse the membrane as a helical segment. At 174-182 (KVSREKAKR) the chain is on the cytoplasmic side. A helical membrane pass occupies residues 183–203 (MIAASWILDAAFVTPVFFFYG). Over 204 to 221 (SNWDSHCNYFLPPSWEGT) the chain is Extracellular. Residues 222–242 (AYTVIHFLVGFVIPSVLIILF) traverse the membrane as a helical segment. Topologically, residues 243-277 (YQKVIKYIWRIGTDGRTLRRTMNIVPRTKVKTVKM) are cytoplasmic. Residues 278–298 (FLLLNLVFLFSWLPFHVAQLW) form a helical membrane-spanning segment. Residues 299–309 (HPHEQDYRKSS) lie on the Extracellular side of the membrane. A helical membrane pass occupies residues 310 to 332 (LVFTAVTWVSFSSSASKPTLYSI). Residues 333–415 (YNANFRRGMK…INSNPPNTFV (83 aa)) lie on the Cytoplasmic side of the membrane.

The protein belongs to the G-protein coupled receptor 1 family. In terms of tissue distribution, abundant expression in the brain.

It is found in the cell membrane. In terms of biological role, G-protein coupled receptor that plays a role in the regulation of circadian rhythms and energy metabolism. Participates in maintaining proper circadian gene expression in the suprachiasmatic nucleus (SCN), the locus of the master circadian clock in the brain. May function as a coordinator of aging-associated metabolic dysfunction, stress response, DNA integrity management, and eventual senescence. Upon binding to adropin, modulates mitochondrial energy metabolism via the p44/42-PDK4 signaling pathway, influencing pyruvate dehydrogenase activity. This chain is Probable G-protein coupled receptor 19 (Gpr19), found in Rattus norvegicus (Rat).